The primary structure comprises 212 residues: ATP-dependent Clp protease proteolytic subunit (212 aa).

The Nucleophile role is filled by Ser-114. Residue His-139 is part of the active site.

It belongs to the peptidase S14 family. Fourteen ClpP subunits assemble into 2 heptameric rings which stack back to back to give a disk-like structure with a central cavity, resembling the structure of eukaryotic proteasomes.

Its subcellular location is the cytoplasm. It catalyses the reaction Hydrolysis of proteins to small peptides in the presence of ATP and magnesium. alpha-casein is the usual test substrate. In the absence of ATP, only oligopeptides shorter than five residues are hydrolyzed (such as succinyl-Leu-Tyr-|-NHMec, and Leu-Tyr-Leu-|-Tyr-Trp, in which cleavage of the -Tyr-|-Leu- and -Tyr-|-Trp bonds also occurs).. Cleaves peptides in various proteins in a process that requires ATP hydrolysis. Has a chymotrypsin-like activity. Plays a major role in the degradation of misfolded proteins. The polypeptide is ATP-dependent Clp protease proteolytic subunit (Laribacter hongkongensis (strain HLHK9)).